Consider the following 271-residue polypeptide: Murein DD-endopeptidase MepH (271 aa).

The N-terminal stretch at 1–27 (MARINRISITLCALLFTTLPLTPMAHA) is a signal peptide. The interval 27–102 (ASKQARESSA…KHAVNKTASA (76 aa)) is disordered. The segment covering 55-64 (KTQKTAKKAA) has biased composition (basic residues). Over residues 65–86 (SKSTTKSKTASSVKKSSITASK) the composition is skewed to low complexity. Positions 138–265 (QKATKVAMNK…RHYVGARRVM (128 aa)) constitute a NlpC/P60 domain. Cys-169 acts as the Nucleophile in catalysis. His-224 (proton acceptor) is an active-site residue. The active site involves Gln-236.

The protein belongs to the peptidase C40 family.

Its pathway is cell wall biogenesis; cell wall polysaccharide biosynthesis. In terms of biological role, a murein DD-endopeptidase with specificity for D-Ala-meso-diaminopimelic acid (mDAP) cross-links. Its role is probably to cleave D-Ala-mDAP cross-links to allow insertion of new glycans and thus cell wall expansion. Functionally redundant with MepM and MepH. Partially suppresses an mepS disruption mutant. The sequence is that of Murein DD-endopeptidase MepH (mepH) from Escherichia coli (strain K12).